The following is a 196-amino-acid chain: DnaA initiator-associating protein DiaA (196 aa).

The region spanning Val34–Val196 is the SIS domain.

This sequence belongs to the SIS family. DiaA subfamily. As to quaternary structure, homotetramer; dimer of dimers.

Required for the timely initiation of chromosomal replication via direct interactions with the DnaA initiator protein. The chain is DnaA initiator-associating protein DiaA from Erwinia tasmaniensis (strain DSM 17950 / CFBP 7177 / CIP 109463 / NCPPB 4357 / Et1/99).